The primary structure comprises 238 residues: Ribonuclease PH (238 aa).

Residues R86 and 124–126 (GTR) each bind phosphate.

The protein belongs to the RNase PH family. In terms of assembly, homohexameric ring arranged as a trimer of dimers.

The catalysed reaction is tRNA(n+1) + phosphate = tRNA(n) + a ribonucleoside 5'-diphosphate. Its function is as follows. Phosphorolytic 3'-5' exoribonuclease that plays an important role in tRNA 3'-end maturation. Removes nucleotide residues following the 3'-CCA terminus of tRNAs; can also add nucleotides to the ends of RNA molecules by using nucleoside diphosphates as substrates, but this may not be physiologically important. Probably plays a role in initiation of 16S rRNA degradation (leading to ribosome degradation) during starvation. The sequence is that of Ribonuclease PH from Pectobacterium atrosepticum (strain SCRI 1043 / ATCC BAA-672) (Erwinia carotovora subsp. atroseptica).